The following is a 787-amino-acid chain: Ribonucleoside-diphosphate reductase large subunit (787 aa).

Substrate is bound by residues threonine 209, 224 to 225 (SC), glycine 255, 436 to 440 (NLCTE), and 618 to 622 (PTVSS). Cysteine 225 and cysteine 453 are joined by a disulfide. The Proton acceptor role is filled by asparagine 436. Cysteine 438 serves as the catalytic Cysteine radical intermediate. Glutamate 440 functions as the Proton acceptor in the catalytic mechanism.

This sequence belongs to the ribonucleoside diphosphate reductase large chain family. In terms of assembly, heterotetramer composed of a homodimer of the large subunit (R1) and a homodimer of the small subunit (R2). Larger multisubunit protein complex are also active, composed of (R1)n(R2)n.

It carries out the reaction a 2'-deoxyribonucleoside 5'-diphosphate + [thioredoxin]-disulfide + H2O = a ribonucleoside 5'-diphosphate + [thioredoxin]-dithiol. Ribonucleoside-diphosphate reductase holoenzyme provides the precursors necessary for viral DNA synthesis. Allows virus growth in non-dividing cells, as well as reactivation from latency in infected hosts. Catalyzes the biosynthesis of deoxyribonucleotides from the corresponding ribonucleotides. The chain is Ribonucleoside-diphosphate reductase large subunit from Bos taurus (Bovine).